A 20-amino-acid polypeptide reads, in one-letter code: Equinatoxin-3 (20 aa).

Residues 3 to 12 (AVAGAIIKGA) form a plays an important role in the hemolytic activity region. The N-terminal region stretch occupies residues 11–20 (GAALTFNVLQ).

Belongs to the actinoporin family. Sea anemone subfamily. Octamer or nonamer in membranes. Monomer in the soluble state.

The protein resides in the secreted. It is found in the nematocyst. The protein localises to the target cell membrane. Pore-forming protein that forms cations-selective hydrophilic pores of around 1 nm and causes cardiac stimulation and cytolysis. Pore formation is a multi-step process that involves specific recognition of membrane sphingomyelin (but neither cholesterol nor phosphatidylcholine) using aromatic rich region and adjacent phosphocholine (POC) binding site, firm binding to the membrane (mainly driven by hydrophobic interactions) accompanied by the transfer of the N-terminal region to the lipid-water interface and finally pore formation after oligomerization of monomers. Cytolytic effects include red blood cells hemolysis, platelet aggregation and lysis, cytotoxic and cytostatic effects on fibroblasts. Lethality in mammals has been ascribed to severe vasospasm of coronary vessels, cardiac arrhythmia, and inotropic effects. The sequence is that of Equinatoxin-3 from Actinia equina (Beadlet anemone).